The sequence spans 142 residues: Large ribosomal subunit protein uL11 (142 aa).

Belongs to the universal ribosomal protein uL11 family. As to quaternary structure, part of the ribosomal stalk of the 50S ribosomal subunit. Interacts with L10 and the large rRNA to form the base of the stalk. L10 forms an elongated spine to which L12 dimers bind in a sequential fashion forming a multimeric L10(L12)X complex. One or more lysine residues are methylated.

Forms part of the ribosomal stalk which helps the ribosome interact with GTP-bound translation factors. This chain is Large ribosomal subunit protein uL11, found in Sinorhizobium fredii (strain NBRC 101917 / NGR234).